We begin with the raw amino-acid sequence, 189 residues long: uncharacterized protein (189 aa).

This is an uncharacterized protein from Human adenovirus B serotype 7 (HAdV-7).